Consider the following 513-residue polypeptide: Alpha,alpha-trehalose-phosphate synthase [UDP-forming] (513 aa).

Y40 carries the post-translational modification Phosphotyrosine. Positions 104 and 158 each coordinate D-glucose 6-phosphate. 2 residues coordinate UDP: R294 and K299. Residues R294 and K299 each coordinate UDP-alpha-D-glucose. R332 is a D-glucose 6-phosphate binding site. 393–401 (DGMNLVSYE) provides a ligand contact to UDP-alpha-D-glucose. 397–401 (LVSYE) contributes to the UDP binding site. S503 is subject to Phosphoserine.

This sequence belongs to the glycosyltransferase 20 family. In terms of assembly, homomer. Component of the trehalose synthase complex that contains at least tps1, ntp1 and tpp1. Interacts with tpp1. Interacts with ntp1; the interaction is independent of stress conditions.

It is found in the cytoplasm. It localises to the nucleus. The catalysed reaction is D-glucose 6-phosphate + UDP-alpha-D-glucose = alpha,alpha-trehalose 6-phosphate + UDP + H(+). The protein operates within carbohydrate biosynthesis. Synthase catalytic subunit of the trehalose synthase complex that catalyzes the production of trehalose from glucose-6-phosphate and UDP-alpha-D-glucose in a two step process. The disaccharide trehalose serves as a storage carbohydrate that is mobilized during nutrient stress and spore germination. Together with ntp1, regulates the level of trehalose as a protectant for cell integrity during thermal and osmotic stress. The polypeptide is Alpha,alpha-trehalose-phosphate synthase [UDP-forming] (Schizosaccharomyces pombe (strain 972 / ATCC 24843) (Fission yeast)).